We begin with the raw amino-acid sequence, 758 residues long: Probable serine/threonine-protein kinase HAL5-like (758 aa).

2 disordered regions span residues 1–170 and 189–252; these read MGTV…SADD and IDNA…HRGR. Residues 22–57 show a composition bias toward polar residues; the sequence is RSISGSIKSLFKPSSVQNSTPTVSPHESSPPLGNSD. The span at 58–69 shows a compositional bias: basic and acidic residues; sequence NLKKLVDTKRAE. Residues 129–153 are compositionally biased toward low complexity; it reads SSPRQSSSTNDRSSITSATSSVTSA. A compositionally biased stretch (basic and acidic residues) spans 216–226; sequence DKNFESSEYEI. Residues 227 to 247 are compositionally biased toward polar residues; it reads RSNSLSRIHSTPQNESPTVNN. The 303-residue stretch at 442 to 744 folds into the Protein kinase domain; sequence KSMGVVLGHG…IDQLLQSPWM (303 aa). ATP-binding positions include 448–456 and lysine 485; that span reads LGHGAYGVV. Catalysis depends on aspartate 595, which acts as the Proton acceptor.

Belongs to the protein kinase superfamily. CAMK Ser/Thr protein kinase family. NPR/HAL subfamily. HAL5 sub-subfamily.

The catalysed reaction is L-seryl-[protein] + ATP = O-phospho-L-seryl-[protein] + ADP + H(+). The enzyme catalyses L-threonyl-[protein] + ATP = O-phospho-L-threonyl-[protein] + ADP + H(+). The sequence is that of Probable serine/threonine-protein kinase HAL5-like from Vanderwaltozyma polyspora (strain ATCC 22028 / DSM 70294 / BCRC 21397 / CBS 2163 / NBRC 10782 / NRRL Y-8283 / UCD 57-17) (Kluyveromyces polysporus).